We begin with the raw amino-acid sequence, 373 residues long: 4-hydroxy-3-methylbut-2-en-1-yl diphosphate synthase (flavodoxin) (373 aa).

The [4Fe-4S] cluster site is built by Cys-270, Cys-273, Cys-305, and Glu-312.

This sequence belongs to the IspG family. The cofactor is [4Fe-4S] cluster.

It carries out the reaction (2E)-4-hydroxy-3-methylbut-2-enyl diphosphate + oxidized [flavodoxin] + H2O + 2 H(+) = 2-C-methyl-D-erythritol 2,4-cyclic diphosphate + reduced [flavodoxin]. The protein operates within isoprenoid biosynthesis; isopentenyl diphosphate biosynthesis via DXP pathway; isopentenyl diphosphate from 1-deoxy-D-xylulose 5-phosphate: step 5/6. Its function is as follows. Converts 2C-methyl-D-erythritol 2,4-cyclodiphosphate (ME-2,4cPP) into 1-hydroxy-2-methyl-2-(E)-butenyl 4-diphosphate. This chain is 4-hydroxy-3-methylbut-2-en-1-yl diphosphate synthase (flavodoxin), found in Klebsiella pneumoniae (strain 342).